Here is an 836-residue protein sequence, read N- to C-terminus: DNA-directed RNA polymerase subunit beta' (836 aa).

Zn(2+)-binding residues include Cys71, Cys73, Cys90, and Cys93. The Mg(2+) site is built by Asp623, Asp625, and Asp627.

This sequence belongs to the RNA polymerase beta' chain family. RpoC1 subfamily. As to quaternary structure, in plastids the minimal PEP RNA polymerase catalytic core is composed of four subunits: alpha, beta, beta', and beta''. When a (nuclear-encoded) sigma factor is associated with the core the holoenzyme is formed, which can initiate transcription. The cofactor is Mg(2+). Zn(2+) is required as a cofactor.

The protein localises to the plastid. It is found in the chloroplast. It carries out the reaction RNA(n) + a ribonucleoside 5'-triphosphate = RNA(n+1) + diphosphate. Its function is as follows. DNA-dependent RNA polymerase catalyzes the transcription of DNA into RNA using the four ribonucleoside triphosphates as substrates. This is DNA-directed RNA polymerase subunit beta' (rpoC1) from Chlorella vulgaris (Green alga).